Consider the following 124-residue polypeptide: Small ribosomal subunit protein uS12 (124 aa).

Asp89 is modified (3-methylthioaspartic acid).

It belongs to the universal ribosomal protein uS12 family. Part of the 30S ribosomal subunit. Contacts proteins S8 and S17. May interact with IF1 in the 30S initiation complex.

With S4 and S5 plays an important role in translational accuracy. Functionally, interacts with and stabilizes bases of the 16S rRNA that are involved in tRNA selection in the A site and with the mRNA backbone. Located at the interface of the 30S and 50S subunits, it traverses the body of the 30S subunit contacting proteins on the other side and probably holding the rRNA structure together. The combined cluster of proteins S8, S12 and S17 appears to hold together the shoulder and platform of the 30S subunit. The polypeptide is Small ribosomal subunit protein uS12 (Shewanella halifaxensis (strain HAW-EB4)).